A 294-amino-acid chain; its full sequence is tRNA pseudouridine synthase A (294 aa).

Aspartate 64 functions as the Nucleophile in the catalytic mechanism. Residue tyrosine 122 coordinates substrate.

It belongs to the tRNA pseudouridine synthase TruA family. In terms of assembly, homodimer.

It catalyses the reaction uridine(38/39/40) in tRNA = pseudouridine(38/39/40) in tRNA. In terms of biological role, formation of pseudouridine at positions 38, 39 and 40 in the anticodon stem and loop of transfer RNAs. The chain is tRNA pseudouridine synthase A from Synechococcus sp. (strain ATCC 27144 / PCC 6301 / SAUG 1402/1) (Anacystis nidulans).